Here is a 1807-residue protein sequence, read N- to C-terminus: MSSSIPSVIVCGSQTIPPSRETLDNLASYLTKSPNPELKAVREVLLALPELWAELKATEPQFQALSDEPIITFRDWFLRHDTGSEYEDNIYNLSHLKIHERLPNILLAPLTVIIHIAQYSQYLDGLGLDDSDDCHVHIRQSTSSRNTTDIGPKFQGLCIGSLSAAALDASPTRTALAQNATAAVKLALCIGAYVDSQRLADSGSSSYSEMACFISRWGADCCREMVEEMLSRYPEAYISVELDYNSITITAPSGDMPSLQEDLSREGVRVANVPVNGRYHHSNNGRSLQSLLQLCCSDPCGPFWVPWGQDRLERYLRSILTEPAGWFSDMSETINSITPSETQMPMTTLELGLVSCIPPSLAALPRHHIIRGSLSPPTQPYNYPDTSIAIIGAACKYPGANSLDELWNIFAAGQVMYGEAPPGRFGKETVAGNFLSDADQFDYGLFGISPREAMYMDPQQRIALQVAYQAVESSGYFGSPNPDGDVGCYIGVGNSDYEDNVHSNTPTAYSFTGTSRAFVSGRISHYFKWTGPSITIDTACSSSAAAIHQACSGIILGDCSVALAGGVNIMSSFPADQNIAAAGMTNSTGPCRPFGADATGYSRGEGCGLIVLKRLADALSQGDNVLGVVVATAVNQSDGSSSITVPVLRSQSDLYRRVLSRASMKASDVSYVEAHGTGTQRGDPIEYQGAREVFGSSGRYQAKSHKVYIGSVKANIGHTEAASGVAGVLKVLLMLKHGQIPPQASFTSLNPAIPPSESGQISIATQLEKWKRNFRAACVNNYGAAGNNTAIIICQHPPKTLPSSTNTAQTLTRYPFLITAQSQVSVRRYCLALAQYIETNSKPLSLAAAFSLVAQQQNRNLRHRIAFCASSLPELWRLLTFHAQAAEDTSVLLPPSPRKQVKPIVLVFGGQTGSTLQFSKAVYDSSYHLRQNMDKCDALIQEMGLPSFFPDIFSQEPIEDIVILHSCLFSVQYAYAKAWLDAGLSVHRVIGHSFGQLTAMCISGVLTLENALILVIGRANLIRDCWGEEKGSMLSVQIDRAGAEALAWSESSLGDDSIEVACYNGPNSHVLVGSELAITNVERRASTASLATKRLKTTHGFHSKLVDAIMEQYSNLAHIVSYNAPVIPIETCSETASWKIFTPQLVTEHSRRPVYFCDAVRRVERDLGPCIWLEAGSSSGAVILAKQSLTSKSNYICGLQLGSPSTNPLDSVVDTTLELWNQGSSVQCWAYNPRDLVHPSHFLGLPGYQFDTSPHWLPCATTDHNKSNDPSPVIDGLISLERLSRPEPRVSIFELDQKDWTLAHILRGREVLGGILWPLALYMGLISRAAALLTSSIPSASRLIRFAGLEIKTPLGSDLLNGLCLRLKQVEAWSWGFSLESDCARHATGTVIVDDERTSRPPDHLSSLPDFATATTVFSAPRGVAYKLLEKVAEYDTAYRGLESISMNEDTAIARVHLPPAAGNSRFVGNTITLDQFLLVAEIHALSMEDSKRSEVFACSGFGETTISANFMRATERDRGQTWQVYTRQSAKRGREFLYDTFVYEAGEGEESGSLALALTGARFIRTSTSALQQVVELANTPSRSPVTEEIAPSPNFLQFQEGSANVWSLTVNLLHELTGCALEEISPQTILADMGMDSLAIMEIEARIREVFNVDIRISPVDMGSTVEIICERITAQTSPSHGLVNVVGNSTSNTTSSSSQCTPSSSFESDSDTQATELSLSAPTMEKVARVVATHVGSGEAVLSSSRLHSLGLDSLAVLELQSDLHVNFGVRVHLMQLDCSTTIGDLHALVMRRGVRENIYNGAV.

Positions 107-280 (LAPLTVIIHI…ANVPVNGRYH (174 aa)) constitute a Starter acyltransferase (SAT) domain. The 411-residue stretch at 385 to 795 (DTSIAIIGAA…GNNTAIIICQ (411 aa)) folds into the Ketosynthase family 3 (KS3) domain. Catalysis depends on for beta-ketoacyl synthase activity residues C540, H675, and H718. The Malonyl-CoA:ACP transacylase (MAT) domain occupies 919-1176 (SKAVYDSSYH…LGPCIWLEAG (258 aa)). Residues 1272-1398 (PVIDGLISLE…GTVIVDDERT (127 aa)) are N-terminal hotdog fold. The PKS/mFAS DH domain maps to 1272-1573 (PVIDGLISLE…FIRTSTSALQ (302 aa)). The active-site Proton acceptor; for dehydratase activity is H1304. The tract at residues 1416–1573 (TVFSAPRGVA…FIRTSTSALQ (158 aa)) is C-terminal hotdog fold. The active-site Proton donor; for dehydratase activity is D1475. Positions 1605 to 1679 (ANVWSLTVNL…IICERITAQT (75 aa)) constitute a Carrier 1 domain. At S1639 the chain carries O-(pantetheine 4'-phosphoryl)serine. Residues 1690-1720 (GNSTSNTTSSSSQCTPSSSFESDSDTQATEL) are disordered. Positions 1692–1710 (STSNTTSSSSQCTPSSSFE) are enriched in low complexity. Residues 1721–1797 (SLSAPTMEKV…DLHALVMRRG (77 aa)) form the Carrier 2 domain. An O-(pantetheine 4'-phosphoryl)serine modification is found at S1757.

Pantetheine 4'-phosphate is required as a cofactor.

Its pathway is secondary metabolite biosynthesis; terpenoid biosynthesis. Non-reducing polyketide synthase; part of the cluster A that mediates the biosynthesis of chevalone E and its oxidized derivatives that possess a unique five-membered lactone ring and can synergistically enhance the cytotoxicity of doxorubicin (DOX) in breast cancer cells. Within the pathway, cle1 takes part to the biosynthesis of the molecular scaffold via the synthesis the alpha-pyrone triacetic acid lactone (TAL) from one molecule of acetyl-CoA and two molecules of malonyl-CoA. The molecular scaffold is commonly biosynthesized by a series of enzymes including the non-reducing polyketide synthase (NR-PKS) cle1 that produces the alpha-pyrone triacetic acid lactone (TAL); The membrane-bound prenyltransferase cle5 that accepts TAL as its substrate to perform a C-3 geranylgeranylation reaction, in which the pathway-dedicated GGPS cle6 is required to provide GGPP, the other substrate of cle5; the FAD-dependent monooxygenase Cle3 that forms an (S)-epoxide ring at the terminal olefin of the geranylgeranyl group; and the terpene cyclase Cle7 that catalyzes the cyclization of the prenyl group that yields the pentacyclic pathway intermediate chevalone E. Chevalone E can derivatize into seven new oxidized analogs by the cytochrome P450 monooxygenases cle2 (acting at C-20) and cle4 (acting at C-11 and C-12). The polypeptide is Triacetic acid lactone synthase cle1 (Aspergillus versicolor).